Consider the following 1187-residue polypeptide: Nicotinate dehydrogenase subunit B (1187 aa).

Residues Trp764 to Leu784 traverse the membrane as a helical segment. Cytochrome c domains lie at Ala804–Thr907, Ala949–Glu1057, and Val1075–Phe1163. Heme c-binding residues include Cys818, Cys821, His822, Cys964, Cys967, His968, Cys1088, Cys1091, and His1092.

The cofactor is Mo-molybdopterin cytosine dinucleotide.

The protein resides in the membrane. It carries out the reaction 2 Fe(III)-[cytochrome] + nicotinate + H2O = 2 Fe(II)-[cytochrome] + 6-hydroxynicotinate + 2 H(+). The protein operates within cofactor degradation; nicotinate degradation. Functionally, subunit of the two-component enzyme NicAB that mediates nicotinate hydroxylation, the first step in the aerobic nicotinate degradation pathway. Mediates conversion of nicotinate into 6-hydroxynicotinate (6HNA). The chain is Nicotinate dehydrogenase subunit B (nicB) from Pseudomonas putida (strain ATCC 47054 / DSM 6125 / CFBP 8728 / NCIMB 11950 / KT2440).